We begin with the raw amino-acid sequence, 55 residues long: Lantibiotic epilancin (55 aa).

Positions 1–24 (MNNSLFDLNLNKGVETQKSDLSPQ) are cleaved as a propeptide — cleaved by ElxP. D-lactate; by the dehydratase ElxB and the dehydrogenase ElxO is present on S25. A 2,3-didehydroalanine (Ser); by the dehydratase ElxB modification is found at S27. The residue at position 31 (T31) is a 2,3-didehydrobutyrine; by the dehydratase ElxB. S32 bears the 2,3-didehydroalanine (Ser); by the dehydratase ElxB mark. Positions 36–40 (SKKYC) form a cross-link, lanthionine (Ser-Cys); by the dehydratase ElxB and the cyclase ElxC. 2 consecutive cross-links (beta-methyllanthionine (Thr-Cys); by the dehydratase ElxB and the cyclase ElxC) follow at residues 44–47 (TLTC) and 46–49 (TCGC). T52 bears the 2,3-didehydrobutyrine; by the dehydratase ElxB mark.

Belongs to the type A lantibiotic family. Post-translationally, maturation of this lantibiotic involves the enzymatic conversion of Thr, and Ser into dehydrated AA by ElxB and the formation of thioether bonds with cysteine by the cyclase ElxC. The next steps are cleavage of the leader peptide by ElxP and membrane translocation by ElxT. The leader peptide may be removed before membrane translocation, in contrast to other lantibiotics for which the cleavage occur after translocation. This is suggested by the probable cytoplasmic localization of the serine protease ElxP that cleaves the leader peptide. It is not established whether the 2,3-didehydrobutyrine is the E- or Z-isomer. In terms of processing, the N-terminal D-lactate is probably produced by dehydration of Ser-25 by ElxB, followed by proteolytic removal of the leader peptide by the serine protease ElxP and hydrolysis of the resulting new N-terminal dehydroalanine. This hydrolysis may occur spontaneously. The pyruvate group thus formed is reduced to D-lactate by the NADPH-dependent oxidoreductase ElxO. This N-terminal D-lactate protects the lantibiotic against degradation against aminopeptidase.

Its function is as follows. Lanthionine-containing peptide antibiotic (lantibiotic) active on Gram-positive bacteria such as staphylococci, enterococci and streptococci. The bactericidal activity of lantibiotics is based on depolarization of energized bacterial cytoplasmic membranes, initiated by the formation of aqueous transmembrane pores. This Staphylococcus epidermidis protein is Lantibiotic epilancin (elkA).